A 388-amino-acid polypeptide reads, in one-letter code: Putative 8-amino-7-oxononanoate synthase (388 aa).

R18 contributes to the substrate binding site. A pyridoxal 5'-phosphate-binding site is contributed by 105 to 106 (GY). H130 is a binding site for substrate. Residues S176, 201 to 204 (DDAH), and 232 to 235 (TLSK) each bind pyridoxal 5'-phosphate. K235 carries the post-translational modification N6-(pyridoxal phosphate)lysine. Residue T349 participates in substrate binding.

This sequence belongs to the class-II pyridoxal-phosphate-dependent aminotransferase family. BioF subfamily. In terms of assembly, homodimer. It depends on pyridoxal 5'-phosphate as a cofactor.

The catalysed reaction is 6-carboxyhexanoyl-[ACP] + L-alanine + H(+) = (8S)-8-amino-7-oxononanoate + holo-[ACP] + CO2. The protein operates within cofactor biosynthesis; biotin biosynthesis. Functionally, catalyzes the decarboxylative condensation of pimeloyl-[acyl-carrier protein] and L-alanine to produce 8-amino-7-oxononanoate (AON), [acyl-carrier protein], and carbon dioxide. This chain is Putative 8-amino-7-oxononanoate synthase (bioF), found in Acetivibrio thermocellus (strain ATCC 27405 / DSM 1237 / JCM 9322 / NBRC 103400 / NCIMB 10682 / NRRL B-4536 / VPI 7372) (Clostridium thermocellum).